We begin with the raw amino-acid sequence, 160 residues long: MMEKFEKIEMKIPAKAEYVAIIRLTMAGVANRMGFAYDDMEDMKIAISEACTNIVQHAYKEDVGEITIVFGLYEDRLEIMVADNGVSFNFSTLKSKVGPYDINKPVEHLPENGLGLYLINTLMDDIQIMHDEGMTVLMTKYIQREQVENDGNPISTYRSY.

The protein belongs to the anti-sigma-factor family.

The enzyme catalyses L-seryl-[protein] + ATP = O-phospho-L-seryl-[protein] + ADP + H(+). It carries out the reaction L-threonyl-[protein] + ATP = O-phospho-L-threonyl-[protein] + ADP + H(+). Functionally, negative regulator of sigma-B activity. Phosphorylates and inactivates its specific antagonist protein, RsbV. Upon phosphorylation of RsbV, RsbW is released and binds to sigma-B, thereby blocking its ability to form an RNA polymerase holoenzyme (E-sigma-B). The polypeptide is Serine-protein kinase RsbW (Bacillus mycoides (strain KBAB4) (Bacillus weihenstephanensis)).